A 338-amino-acid polypeptide reads, in one-letter code: E3 ubiquitin-protein ligase RING1 (338 aa).

The segment at 102 to 124 (TTTSSSASIDPNNPSLSGPTRSG) is disordered. The segment covering 110-121 (IDPNNPSLSGPT) has biased composition (polar residues). The RING-type; atypical zinc-finger motif lies at 224–265 (CAVCMDDFEEGTEAKQMPCKHLYHKDCLLPWLELHNSCPVCR). Basic and acidic residues-rich tracts occupy residues 267-279 (ELPT…ERRV) and 298-309 (SDGDNRTVERSF). The segment at 267-338 (ELPTDDPDYE…NAETRQEDLD (72 aa)) is disordered.

In terms of processing, auto-ubiquitinated as part of the enzymatic reaction. Mostly expressed in cotton fibers, and, to a lower extent, in leaves and flowers.

The catalysed reaction is S-ubiquitinyl-[E2 ubiquitin-conjugating enzyme]-L-cysteine + [acceptor protein]-L-lysine = [E2 ubiquitin-conjugating enzyme]-L-cysteine + N(6)-ubiquitinyl-[acceptor protein]-L-lysine.. Its pathway is protein modification; protein ubiquitination. Its function is as follows. E3 ubiquitin-protein ligase which accepts ubiquitin from an E2 ubiquitin-conjugating enzyme in the form of a thioester and then directly transfers the ubiquitin to targeted substrates. Promotes polyubiquitination of target proteins. This chain is E3 ubiquitin-protein ligase RING1 (RING1), found in Gossypium hirsutum (Upland cotton).